The primary structure comprises 645 residues: Sodium/hydrogen exchanger 9 (645 aa).

Over 1–20 (MERQSRVMSEKDEYQFQHQG) the chain is Lumenal. A helical membrane pass occupies residues 21-41 (AVELLVFNFLLILTILTIWLF). Over 42–45 (KNHR) the chain is Cytoplasmic. The helical transmembrane segment at 46–66 (FRFLHETGGAMVYGLIMGLIL) threads the bilayer. The Lumenal segment spans residues 67 to 126 (RYATAPTDIESGTVYDCVKLTFSPSTLLVNITDQVYEYKYKREISQHNINPHQGNAILEK). Asparagine 96 is a glycosylation site (N-linked (GlcNAc...) asparagine). A helical membrane pass occupies residues 127 to 147 (MTFDPEIFFNVLLPPIIFHAG). At 148–164 (YSLKKRHFFQNLGSILT) the chain is on the cytoplasmic side. Residues 165–185 (YAFLGTAISCIVIGLIMYGFV) traverse the membrane as a helical segment. Topologically, residues 186 to 203 (KAMIHAGQLKNGDFHFTD) are lumenal. Residues 204–224 (CLFFGSLMSATDPVTVLAIFH) form a helical membrane-spanning segment. Topologically, residues 225–235 (ELHVDPDLYTL) are cytoplasmic. Residues 236 to 256 (LFGESVLNDAVAIVLTYSISI) form a helical membrane-spanning segment. Topologically, residues 257-277 (YSPKENPNAFDAAAFFQSVGN) are lumenal. A helical membrane pass occupies residues 278 to 298 (FLGIFAGSFAMGSAYAIITAL). Over 299–301 (LTK) the chain is Cytoplasmic. 2 consecutive transmembrane segments (helical) span residues 302-322 (FTKLCEFPMLETGLFFLLSWS) and 323-343 (AFLSAEAAGLTGIVAVLFCGV). Over 344–364 (TQAHYTYNNLSSDSKIRTKQL) the chain is Cytoplasmic. Residues 365–385 (FEFMNFLAENVIFCYMGLALF) traverse the membrane as a helical segment. Position 386 (threonine 386) is a topological domain, lumenal. The helical transmembrane segment at 387–407 (FQNHIFNALFILGAFLAIFVA) threads the bilayer. Residues 408–429 (RACNIYPLSFLLNLGRKQKIPW) are Cytoplasmic-facing. The helical transmembrane segment at 430–450 (NFQHMMMFSGLRGAIAFALAI) threads the bilayer. Over 451-465 (RNTESQPKQMMFTTT) the chain is Lumenal. A helical membrane pass occupies residues 466 to 486 (LLLVFFTVWVFGGGTTPMLTW). The Cytoplasmic portion of the chain corresponds to 487 to 645 (LQIRVGVDLD…EQTLGQSQLN (159 aa)). Positions 594–622 (QASSPCSPPARLGLDQKASPQTPGKENIY) are disordered.

This sequence belongs to the monovalent cation:proton antiporter 1 (CPA1) transporter (TC 2.A.36) family. In terms of assembly, homodimer; phosphatidylinositol-4,5-bisphosphate (PIP2) and phosphatidylinositol 3,4,5-trisphosphate (PIP3) could be involved in the dimer stabilization. Interacts (via the C-terminus) with RACK1. Interacts with CHP1. Ubiquitously expressed in all tissues tested. Expressed at highest levels in heart and skeletal muscle, followed by placenta, kidney, and liver. Expressed in the brain, in the medulla and spinal cord.

Its subcellular location is the late endosome membrane. The protein localises to the early endosome membrane. It localises to the recycling endosome membrane. It is found in the cell membrane. The protein resides in the cytoplasmic vesicle. Its subcellular location is the phagosome membrane. It catalyses the reaction Na(+)(in) + H(+)(out) = Na(+)(out) + H(+)(in). It carries out the reaction K(+)(in) + H(+)(out) = K(+)(out) + H(+)(in). Its function is as follows. Endosomal Na(+), K(+)/H(+) antiporter. Mediates the electroneutral exchange of endosomal luminal H(+) for a cytosolic Na(+) or K(+). By facilitating proton efflux, SLC9A9 counteracts the acidity generated by vacuolar (V)-ATPase, thereby limiting luminal acidification. Regulates organellar pH and consequently, e.g., endosome maturation and endocytic trafficking of plasma membrane receptors and neurotransporters. Promotes the recycling of transferrin receptors back to the cell surface to facilitate additional iron uptake in the brain. Regulates synaptic transmission by regulating the luminal pH of axonal endosomes. Regulates phagosome lumenal pH, thus affecting phagosome maturation, and consequently, microbicidal activity in macrophages. Can also be active at the cell surface of specialized cells, e.g., in the inner ear hair bundles uses the high K(+) of the endolymph to regulate intracelular pH. This is Sodium/hydrogen exchanger 9 from Homo sapiens (Human).